The primary structure comprises 338 residues: Flap endonuclease 1 (338 aa).

The segment at 1-98 is N-domain; sequence MGTDIGDLLQ…ETLSRRKEVR (98 aa). Residues aspartate 27, aspartate 80, glutamate 152, glutamate 154, aspartate 173, aspartate 175, and aspartate 236 each contribute to the Mg(2+) site. Residues 116–257 form an I-domain region; sequence AAYKYAQASS…TALKLIKKHG (142 aa). The interaction with PCNA stretch occupies residues 330 to 338; the sequence is RQKTLDQWF.

This sequence belongs to the XPG/RAD2 endonuclease family. FEN1 subfamily. As to quaternary structure, interacts with PCNA. PCNA stimulates the nuclease activity without altering cleavage specificity. Requires Mg(2+) as cofactor.

Functionally, structure-specific nuclease with 5'-flap endonuclease and 5'-3' exonuclease activities involved in DNA replication and repair. During DNA replication, cleaves the 5'-overhanging flap structure that is generated by displacement synthesis when DNA polymerase encounters the 5'-end of a downstream Okazaki fragment. Binds the unpaired 3'-DNA end and kinks the DNA to facilitate 5' cleavage specificity. Cleaves one nucleotide into the double-stranded DNA from the junction in flap DNA, leaving a nick for ligation. Also involved in the base excision repair (BER) pathway. Acts as a genome stabilization factor that prevents flaps from equilibrating into structures that lead to duplications and deletions. Also possesses 5'-3' exonuclease activity on nicked or gapped double-stranded DNA. The chain is Flap endonuclease 1 from Methanosarcina acetivorans (strain ATCC 35395 / DSM 2834 / JCM 12185 / C2A).